Here is a 350-residue protein sequence, read N- to C-terminus: Protein-glutamate methylesterase/protein-glutamine glutaminase (350 aa).

In terms of domain architecture, Response regulatory spans R5 to L122. The residue at position 56 (D56) is a 4-aspartylphosphate. Positions L153–G345 constitute a CheB-type methylesterase domain. Catalysis depends on residues S165, H191, and D287.

Belongs to the CheB family. Post-translationally, phosphorylated by CheA. Phosphorylation of the N-terminal regulatory domain activates the methylesterase activity.

Its subcellular location is the cytoplasm. It carries out the reaction [protein]-L-glutamate 5-O-methyl ester + H2O = L-glutamyl-[protein] + methanol + H(+). The enzyme catalyses L-glutaminyl-[protein] + H2O = L-glutamyl-[protein] + NH4(+). Functionally, involved in chemotaxis. Part of a chemotaxis signal transduction system that modulates chemotaxis in response to various stimuli. Catalyzes the demethylation of specific methylglutamate residues introduced into the chemoreceptors (methyl-accepting chemotaxis proteins or MCP) by CheR. Also mediates the irreversible deamidation of specific glutamine residues to glutamic acid. Does not interact with the C-terminal pentapeptide of the chemoreceptors. In Pectobacterium atrosepticum (strain SCRI 1043 / ATCC BAA-672) (Erwinia carotovora subsp. atroseptica), this protein is Protein-glutamate methylesterase/protein-glutamine glutaminase.